Reading from the N-terminus, the 221-residue chain is Glutathione S-transferase class-mu 26 kDa isozyme 1 (221 aa).

Residues 2–82 enclose the GST N-terminal domain; that stretch reads PAKLGYWKIR…YIADKHGMIG (81 aa). Glutathione contacts are provided by residues 7–8, 40–44, 53–54, and 66–67; these read YW, WFSKK, NL, and QS. The region spanning 84–202 is the GST C-terminal domain; sequence TPEERARVSM…ESNRFIKWPL (119 aa). Tyrosine 110 contacts substrate.

It belongs to the GST superfamily. Mu family. As to quaternary structure, homodimer.

It carries out the reaction RX + glutathione = an S-substituted glutathione + a halide anion + H(+). Conjugation of reduced glutathione to a wide number of exogenous and endogenous hydrophobic electrophiles. Its function is as follows. GST isoenzymes appear to play a central role in the parasite detoxification system. Other functions are also suspected including a role in increasing the solubility of haematin in the parasite gut. This Fasciola hepatica (Liver fluke) protein is Glutathione S-transferase class-mu 26 kDa isozyme 1.